We begin with the raw amino-acid sequence, 348 residues long: Dihydroorotate dehydrogenase (quinone) (348 aa).

FMN contacts are provided by residues 60 to 64 (AGFDK) and T84. K64 contributes to the substrate binding site. 109 to 113 (NRLGF) serves as a coordination point for substrate. FMN-binding residues include N138 and N169. N169 contacts substrate. The active-site Nucleophile is S172. N174 is a binding site for substrate. FMN-binding residues include K207 and S235. Position 236–237 (236–237 (NT)) interacts with substrate. Residues G258, G287, and 308-309 (YS) contribute to the FMN site.

This sequence belongs to the dihydroorotate dehydrogenase family. Type 2 subfamily. In terms of assembly, monomer. FMN serves as cofactor.

The protein localises to the cell membrane. It carries out the reaction (S)-dihydroorotate + a quinone = orotate + a quinol. The protein operates within pyrimidine metabolism; UMP biosynthesis via de novo pathway; orotate from (S)-dihydroorotate (quinone route): step 1/1. Functionally, catalyzes the conversion of dihydroorotate to orotate with quinone as electron acceptor. This Parvibaculum lavamentivorans (strain DS-1 / DSM 13023 / NCIMB 13966) protein is Dihydroorotate dehydrogenase (quinone).